The following is a 423-amino-acid chain: UDP-N-acetylglucosamine 1-carboxyvinyltransferase (423 aa).

Lysine 22–asparagine 23 is a phosphoenolpyruvate binding site. UDP-N-acetyl-alpha-D-glucosamine is bound at residue arginine 98. Cysteine 122 (proton donor) is an active-site residue. The residue at position 122 (cysteine 122) is a 2-(S-cysteinyl)pyruvic acid O-phosphothioketal. Residues arginine 127–glutamine 131, aspartate 311, and isoleucine 333 contribute to the UDP-N-acetyl-alpha-D-glucosamine site.

Belongs to the EPSP synthase family. MurA subfamily.

It localises to the cytoplasm. It catalyses the reaction phosphoenolpyruvate + UDP-N-acetyl-alpha-D-glucosamine = UDP-N-acetyl-3-O-(1-carboxyvinyl)-alpha-D-glucosamine + phosphate. The protein operates within cell wall biogenesis; peptidoglycan biosynthesis. Functionally, cell wall formation. Adds enolpyruvyl to UDP-N-acetylglucosamine. The protein is UDP-N-acetylglucosamine 1-carboxyvinyltransferase of Stenotrophomonas maltophilia (strain K279a).